A 206-amino-acid chain; its full sequence is Large ribosomal subunit protein uL4 (206 aa).

The disordered stretch occupies residues 63-97 (MYKQKGTGRARHHSARAPQFRGGGKAHGPVVRSHE). The segment covering 64–77 (YKQKGTGRARHHSA) has biased composition (basic residues).

The protein belongs to the universal ribosomal protein uL4 family. In terms of assembly, part of the 50S ribosomal subunit.

One of the primary rRNA binding proteins, this protein initially binds near the 5'-end of the 23S rRNA. It is important during the early stages of 50S assembly. It makes multiple contacts with different domains of the 23S rRNA in the assembled 50S subunit and ribosome. Its function is as follows. Forms part of the polypeptide exit tunnel. The polypeptide is Large ribosomal subunit protein uL4 (Rhizobium rhizogenes (strain K84 / ATCC BAA-868) (Agrobacterium radiobacter)).